We begin with the raw amino-acid sequence, 92 residues long: Small ribosomal subunit protein uS19 (92 aa).

It belongs to the universal ribosomal protein uS19 family.

Its function is as follows. Protein S19 forms a complex with S13 that binds strongly to the 16S ribosomal RNA. The chain is Small ribosomal subunit protein uS19 from Staphylococcus aureus (strain Mu3 / ATCC 700698).